Reading from the N-terminus, the 132-residue chain is Large ribosomal subunit protein bL19 (132 aa).

This sequence belongs to the bacterial ribosomal protein bL19 family.

This protein is located at the 30S-50S ribosomal subunit interface and may play a role in the structure and function of the aminoacyl-tRNA binding site. The protein is Large ribosomal subunit protein bL19 of Rhodospirillum centenum (strain ATCC 51521 / SW).